Reading from the N-terminus, the 446-residue chain is Probable arogenate/prephenate dehydrogenase (446 aa).

Residues 6-288 (LTISIIGGTD…SEAKRGAYYS (283 aa)) enclose the Prephenate/arogenate dehydrogenase domain.

It in the N-terminal section; belongs to the prephenate/arogenate dehydrogenase family.

This chain is Probable arogenate/prephenate dehydrogenase, found in Methanocaldococcus jannaschii (strain ATCC 43067 / DSM 2661 / JAL-1 / JCM 10045 / NBRC 100440) (Methanococcus jannaschii).